The following is a 335-amino-acid chain: Putative serine/threonine-protein kinase 040L (335 aa).

In terms of domain architecture, Protein kinase spans 33–329; it reads YYYQEFHDEG…DRLTELHHHL (297 aa). Residues 39-47 and Lys-62 each bind ATP; that span reads HDEGGYGSI. Asp-196 (proton acceptor) is an active-site residue.

It belongs to the protein kinase superfamily. Ser/Thr protein kinase family.

This is Putative serine/threonine-protein kinase 040L from Invertebrate iridescent virus 3 (IIV-3).